Here is a 178-residue protein sequence, read N- to C-terminus: RNA pyrophosphohydrolase (178 aa).

The Nudix hydrolase domain maps to 18–171 (PYRPCVGLMV…KRKVYEQVVA (154 aa)). Positions 59–80 (GGIDKGEDPAQAALRELYEETG) match the Nudix box motif.

This sequence belongs to the Nudix hydrolase family. RppH subfamily. It depends on a divalent metal cation as a cofactor.

Its function is as follows. Accelerates the degradation of transcripts by removing pyrophosphate from the 5'-end of triphosphorylated RNA, leading to a more labile monophosphorylated state that can stimulate subsequent ribonuclease cleavage. This Brucella canis (strain ATCC 23365 / NCTC 10854 / RM-666) protein is RNA pyrophosphohydrolase.